Consider the following 170-residue polypeptide: Peptide deformylase (170 aa).

Residues C91 and H133 each coordinate Fe cation. The active site involves E134. H137 contributes to the Fe cation binding site.

Belongs to the polypeptide deformylase family. Fe(2+) is required as a cofactor.

The enzyme catalyses N-terminal N-formyl-L-methionyl-[peptide] + H2O = N-terminal L-methionyl-[peptide] + formate. Functionally, removes the formyl group from the N-terminal Met of newly synthesized proteins. Requires at least a dipeptide for an efficient rate of reaction. N-terminal L-methionine is a prerequisite for activity but the enzyme has broad specificity at other positions. The sequence is that of Peptide deformylase from Histophilus somni (strain 129Pt) (Haemophilus somnus).